Here is a 298-residue protein sequence, read N- to C-terminus: Lipoyl synthase (298 aa).

Residues Cys-40, Cys-45, Cys-51, Cys-67, Cys-71, Cys-74, and Ser-280 each contribute to the [4Fe-4S] cluster site. The region spanning 53 to 269 is the Radical SAM core domain; it reads AVRKTATFMI…KEIALSKGFS (217 aa).

Belongs to the radical SAM superfamily. Lipoyl synthase family. [4Fe-4S] cluster serves as cofactor.

The protein localises to the cytoplasm. The enzyme catalyses [[Fe-S] cluster scaffold protein carrying a second [4Fe-4S](2+) cluster] + N(6)-octanoyl-L-lysyl-[protein] + 2 oxidized [2Fe-2S]-[ferredoxin] + 2 S-adenosyl-L-methionine + 4 H(+) = [[Fe-S] cluster scaffold protein] + N(6)-[(R)-dihydrolipoyl]-L-lysyl-[protein] + 4 Fe(3+) + 2 hydrogen sulfide + 2 5'-deoxyadenosine + 2 L-methionine + 2 reduced [2Fe-2S]-[ferredoxin]. The protein operates within protein modification; protein lipoylation via endogenous pathway; protein N(6)-(lipoyl)lysine from octanoyl-[acyl-carrier-protein]. Its function is as follows. Catalyzes the radical-mediated insertion of two sulfur atoms into the C-6 and C-8 positions of the octanoyl moiety bound to the lipoyl domains of lipoate-dependent enzymes, thereby converting the octanoylated domains into lipoylated derivatives. The sequence is that of Lipoyl synthase from Bacillus cereus (strain G9842).